The sequence spans 408 residues: DNA-directed RNA polymerase subunit Rpo1C (408 aa).

Belongs to the RNA polymerase beta' chain family. As to quaternary structure, part of the RNA polymerase complex.

The protein resides in the cytoplasm. The catalysed reaction is RNA(n) + a ribonucleoside 5'-triphosphate = RNA(n+1) + diphosphate. Functionally, DNA-dependent RNA polymerase (RNAP) catalyzes the transcription of DNA into RNA using the four ribonucleoside triphosphates as substrates. Forms part of the jaw domain. The sequence is that of DNA-directed RNA polymerase subunit Rpo1C from Methanosarcina mazei (strain ATCC BAA-159 / DSM 3647 / Goe1 / Go1 / JCM 11833 / OCM 88) (Methanosarcina frisia).